Reading from the N-terminus, the 74-residue chain is UPF0154 protein OB1676 (74 aa).

A helical transmembrane segment spans residues 4-24 (IWVVLIAIAALVAGVALGFFI).

Belongs to the UPF0154 family.

Its subcellular location is the membrane. In Oceanobacillus iheyensis (strain DSM 14371 / CIP 107618 / JCM 11309 / KCTC 3954 / HTE831), this protein is UPF0154 protein OB1676.